The following is a 391-amino-acid chain: Phosphoglycerate kinase (391 aa).

Residues Asp-19–Asn-21, Arg-35, His-58–Arg-61, Arg-117, and Arg-150 contribute to the substrate site. ATP is bound by residues Lys-201, Glu-323, and Gly-349–Thr-352.

This sequence belongs to the phosphoglycerate kinase family. In terms of assembly, monomer.

The protein resides in the cytoplasm. The catalysed reaction is (2R)-3-phosphoglycerate + ATP = (2R)-3-phospho-glyceroyl phosphate + ADP. The protein operates within carbohydrate degradation; glycolysis; pyruvate from D-glyceraldehyde 3-phosphate: step 2/5. This Desulforapulum autotrophicum (strain ATCC 43914 / DSM 3382 / VKM B-1955 / HRM2) (Desulfobacterium autotrophicum) protein is Phosphoglycerate kinase.